A 141-amino-acid chain; its full sequence is Hemoglobin subunit alpha-1 (141 aa).

The Globin domain maps to 1 to 141; that stretch reads VLSPADKNNV…VSTVLTSKYR (141 aa). Histidine 58 is a binding site for O2. Heme b is bound at residue histidine 87.

Belongs to the globin family. As to quaternary structure, heterotetramer of two alpha chains and two beta chains. Red blood cells.

Involved in oxygen transport from the lung to the various peripheral tissues. This Varecia variegata (Black-and-white ruffed lemur) protein is Hemoglobin subunit alpha-1.